Reading from the N-terminus, the 578-residue chain is Polypeptide N-acetylgalactosaminyltransferase 4 (578 aa).

Residues 1–12 (MAVRWTWAGKSC) lie on the Cytoplasmic side of the membrane. A helical; Signal-anchor for type II membrane protein transmembrane segment spans residues 13–35 (LLLALLTLAYILVEFSVSTLYAS). At 36-578 (PGAGGARELG…DKNQLWRFEK (543 aa)) the chain is on the lumenal side. Intrachain disulfides connect Cys124-Cys357, Cys348-Cys421, Cys457-Cys477, Cys503-Cys518, and Cys547-Cys565. Residues 134–243 (LPTTSVIIAF…TGWLEPLLER (110 aa)) form a catalytic subdomain A region. Asp175 and Arg204 together coordinate substrate. Residues Asp227 and His229 each coordinate Mn(2+). Residues 303–365 (PIRSPTMAGG…PCSHVGHVFP (63 aa)) form a catalytic subdomain B region. Substrate is bound at residue Trp334. His362 is a Mn(2+) binding site. A substrate-binding site is contributed by Tyr370. Residues 444 to 577 (WHGAIRSMGI…LDKNQLWRFE (134 aa)) enclose the Ricin B-type lectin domain. Asn471 carries N-linked (GlcNAc...) asparagine glycosylation.

Belongs to the glycosyltransferase 2 family. GalNAc-T subfamily. It depends on Mn(2+) as a cofactor. In terms of tissue distribution, highly expressed in sublingual gland, stomach, colon, small intestine and cervix. Expressed at intermediate levels in kidney, ovary, lung and uterus. Weakly expressed in spleen, liver, heart and brain. Not expressed in submandibular and parotid glands, skeletal muscle and testis.

Its subcellular location is the golgi apparatus membrane. The enzyme catalyses L-seryl-[protein] + UDP-N-acetyl-alpha-D-galactosamine = a 3-O-[N-acetyl-alpha-D-galactosaminyl]-L-seryl-[protein] + UDP + H(+). The catalysed reaction is L-threonyl-[protein] + UDP-N-acetyl-alpha-D-galactosamine = a 3-O-[N-acetyl-alpha-D-galactosaminyl]-L-threonyl-[protein] + UDP + H(+). It participates in protein modification; protein glycosylation. Catalyzes the initial reaction in O-linked oligosaccharide biosynthesis, the transfer of an N-acetyl-D-galactosamine residue to a serine or threonine residue on the protein receptor. Has a highest activity toward EA2 peptide substrate and a much lower activity with EPO-T, Muc2, Muc1a, Muc1b. This chain is Polypeptide N-acetylgalactosaminyltransferase 4 (Galnt4), found in Mus musculus (Mouse).